A 737-amino-acid polypeptide reads, in one-letter code: Protein OPG064 (737 aa).

At Met-1 the chain carries N-acetylmethionine; by host. Cysteines 496 and 535 form a disulfide.

It belongs to the orthopoxvirus OPG064 family. Interacts with host KLC2; this interaction promotes IEV trafficking by engaging the host kinesin-1 complex. Interacts with protein OPG056/F12. In terms of processing, N-acetylated on initiator methionine by host.

Its function is as follows. Plays a role in intracellular enveloped virus (IEV) transport to the cell surface on microtubules. Together with protein OPG056/F12, forms a complex that interacts with host KLC2 (kinesin light chain isoform 2) to engage the kinesin-1 complex and thereby promote IEV trafficking. The chain is Protein OPG064 (OPG064) from Bos taurus (Bovine).